A 554-amino-acid chain; its full sequence is uncharacterized protein (554 aa).

This is an uncharacterized protein from Acidianus sp. F28 (AFV-2).